The following is a 743-amino-acid chain: Inhibitor of nuclear factor kappa-B kinase subunit alpha (743 aa).

In terms of domain architecture, Protein kinase spans 15–300 (WDMKDRLGTG…IDCGRPRCFM (286 aa)). Residues 21–29 (LGTGGFGNV) and Lys44 contribute to the ATP site. The active-site Proton acceptor is the Asp144. Residues 453–474 (LLRFNTNLTKMKNTMVSASQQL) form a leucine-zipper region. The NEMO-binding stretch occupies residues 736 to 741 (MDFSWL).

The protein belongs to the protein kinase superfamily. Ser/Thr protein kinase family. I-kappa-B kinase subfamily.

Its subcellular location is the cytoplasm. The protein localises to the nucleus. It carries out the reaction L-seryl-[I-kappa-B protein] + ATP = O-phospho-L-seryl-[I-kappa-B protein] + ADP + H(+). With respect to regulation, activated when phosphorylated and inactivated when dephosphorylated. Functionally, phosphorylates inhibitors of NF-kappa-B thus leading to the dissociation of the inhibitor/NF-kappa-B complex and ultimately the degradation of the inhibitor. Phosphorylates 'Ser-10' of histone H3 at NF-kappa-B-regulated promoters during inflammatory responses triggered by cytokines. The protein is Inhibitor of nuclear factor kappa-B kinase subunit alpha (chuk) of Xenopus laevis (African clawed frog).